A 320-amino-acid polypeptide reads, in one-letter code: Uroplakin-3b (320 aa).

Residues 1 to 29 (MGLPWGQPHLGLQMLLLALNCLRPSLSLG) form the signal peptide. Residues 30 to 240 (EWGSWMDASS…LHPLFSGRPP (211 aa)) lie on the Lumenal side of the membrane. N-linked (GlcNAc...) asparagine glycosylation is present at asparagine 133. Residues 241–266 (TLGLLGSLYHALLQPVVAGGGPGAAA) traverse the membrane as a helical segment. The Cytoplasmic portion of the chain corresponds to 267 to 320 (DRLLHGQALHDPPHPTQRGRHTAGGLQAWPGPPPQPQPLAWPLCMGLGEMGRWE). The disordered stretch occupies residues 273–303 (QALHDPPHPTQRGRHTAGGLQAWPGPPPQPQ).

Belongs to the uroplakin-3 family. As to quaternary structure, heterodimer with uroplakin-1B (UPK1B).

The protein localises to the cell membrane. Its function is as follows. Component of the asymmetric unit membrane (AUM); a highly specialized biomembrane elaborated by terminally differentiated urothelial cells. May play an important role in AUM-cytoskeleton interaction in terminally differentiated urothelial cells. It also contributes to the formation of urothelial glycocalyx which may play an important role in preventing bacterial adherence. The protein is Uroplakin-3b (UPK3B) of Homo sapiens (Human).